The following is an 80-amino-acid chain: Protein YibX (80 aa).

This Escherichia coli (strain K12) protein is Protein YibX.